The primary structure comprises 159 residues: Dynein 18 kDa light chain, flagellar outer arm (159 aa).

EF-hand domains lie at 18-53 (EEMD…LGQN), 54-89 (PTEE…NKQM), and 129-159 (ELTV…ALLS). Ca(2+) contacts are provided by D31, D33, S35, T37, E42, D67, D69, S71, C73, and E78.

As to quaternary structure, consists of at least 3 heavy chains (alpha, beta and gamma), 2 intermediate chains and 8 light chains.

Its subcellular location is the cell projection. The protein resides in the cilium. It is found in the flagellum. May be involved in the calcium-mediated regulation of dynein motor function. Binds 1 mole of calcium. The sequence is that of Dynein 18 kDa light chain, flagellar outer arm from Chlamydomonas reinhardtii (Chlamydomonas smithii).